The sequence spans 184 residues: Gremlin-1 (184 aa).

An N-terminal signal peptide occupies residues 1–24 (MSRTAYTVGALLLLLGTLLPAAEG). Positions 24–77 (GKKKGSQGAIPPPDKAQHNDSEQTQSPQQPGSRNRGRGQGRGTAMPGEEVLESS) are disordered. An N-linked (GlcNAc...) asparagine glycan is attached at Asn42. 4 cysteine pairs are disulfide-bonded: Cys94–Cys144, Cys108–Cys158, Cys118–Cys176, and Cys122–Cys178. The CTCK domain occupies 94 to 184 (CKTQPLKQTI…QCRCISIDLD (91 aa)).

This sequence belongs to the DAN family. In terms of assembly, homodimer; can also form homooligomers. Interacts with BMP2; can form higher oligomers with BMP2. Interacts with SLIT1 and SLIT2 in a glycosylation-dependent manner. Highly expressed in small intestine, fetal brain and colon. Expression is restricted to intestinal subepithelial myofibroblasts (ISEMFs) at the crypt base. In subjects with HMPS1, by contrast, GREM1 is expressed, not only in basal ISEMFs, but also at very high levels in epithelial cells (predominantly colonocytes), with expression extending most of the way up the sides of the crypt. Weakly expressed in brain, ovary, prostate, pancreas and skeletal muscle. In brain found in the region localized around the internal capsule in the large subcortical nuclei, including caudate, putamen, substantia nigra, thalamus and subthalamus. Predominantly expressed in normal cells including neurons, astrocytes and fibroblasts.

It localises to the secreted. Cytokine that may play an important role during carcinogenesis and metanephric kidney organogenesis, as a BMP antagonist required for early limb outgrowth and patterning in maintaining the FGF4-SHH feedback loop. Down-regulates the BMP4 signaling in a dose-dependent manner. Antagonist of BMP2; inhibits BMP2-mediated differentiation of osteoblasts (in vitro). Acts as inhibitor of monocyte chemotaxis. Can inhibit the growth or viability of normal cells but not transformed cells when is overexpressed. The chain is Gremlin-1 (GREM1) from Homo sapiens (Human).